The following is a 573-amino-acid chain: N(2)-(2-carboxyethyl)arginine synthase (573 aa).

Positions 271 and 301 each coordinate substrate. Residue 410–413 (IGFF) participates in thiamine diphosphate binding. Substrate is bound at residue 414–415 (RH). 436-438 (SSF) contacts thiamine diphosphate. Asp-463 is a Mg(2+) binding site. Thiamine diphosphate contacts are provided by residues 464-465 (GG), 490-495 (NDTNGL), and Tyr-561. Residues Asn-490 and Thr-492 each coordinate Mg(2+). Leu-571 lines the substrate pocket.

Homotetramer; dimer of dimers. Requires Mg(2+) as cofactor. Thiamine diphosphate serves as cofactor.

It carries out the reaction D-glyceraldehyde 3-phosphate + L-arginine = N(2)-(2-carboxyethyl)-L-arginine + phosphate + H(+). Involved in the biosynthesis of the beta-lactamase inhibitor, clavulanic acid. Catalyzes the thiamine diphosphate (ThDP) dependent condensation of D-glyceraldehyde-3-phosphate (D-G3P) with L-arginine to yield the beta-amino acid, N2-(2-carboxyethyl)arginine (CEA) via a beta-elimination resulting in the formation of an enol which undergoes a second elimination to generate the alpha,beta-unsaturated acryloyl-ThDP. The protein is N(2)-(2-carboxyethyl)arginine synthase of Streptomyces clavuligerus.